The chain runs to 332 residues: Ribosomal RNA small subunit methyltransferase C (332 aa).

It belongs to the methyltransferase superfamily. RsmC family. As to quaternary structure, monomer.

The protein localises to the cytoplasm. The enzyme catalyses guanosine(1207) in 16S rRNA + S-adenosyl-L-methionine = N(2)-methylguanosine(1207) in 16S rRNA + S-adenosyl-L-homocysteine + H(+). Specifically methylates the guanine in position 1207 of 16S rRNA in the 30S particle. This Pseudomonas syringae pv. tomato (strain ATCC BAA-871 / DC3000) protein is Ribosomal RNA small subunit methyltransferase C.